A 604-amino-acid chain; its full sequence is Protein glass (604 aa).

4 disordered regions span residues 111–139 (ISTTPPASSGNGSSNNGAGGGSSGNHGYW), 199–237 (NSHNHGQMHSQHQQHQHQQSQVQASHVGNSLLQSSGGNN), 359–400 (LPPL…SPTS), and 414–434 (EDEEDSNEDLDGDEGSSGGEM). Composition is skewed to low complexity over residues 117-126 (ASSGNGSSNN) and 200-237 (SHNHGQMHSQHQQHQHQQSQVQASHVGNSLLQSSGGNN). The segment covering 414–427 (EDEEDSNEDLDGDE) has biased composition (acidic residues). C2H2-type zinc fingers lie at residues 437–459 (NLCRLCGKTYARPSTLKTHLRTH), 465–487 (YRCPDCNKSFSQAANLTAHVRTH), 493–515 (FRCPICDRRFSQSSSVTTHMRTH), 521–543 (YRCSSCKKSFSDSSTLTKHLRIH), and 549–571 (YQCKLCLLRFSQSGNLNRHMRVH). Residues 566 to 604 (RHMRVHGNNNSSNGSNGATGVGGESSTGSGVGGGNSLLT) are disordered. Residues 572 to 581 (GNNNSSNGSN) show a composition bias toward low complexity. Residues 582 to 604 (GATGVGGESSTGSGVGGGNSLLT) show a composition bias toward gly residues.

The protein localises to the nucleus. Transcription factor required for gene expression specific to photoreceptor cells. The chain is Protein glass (gl) from Drosophila melanogaster (Fruit fly).